A 440-amino-acid chain; its full sequence is Chitinase-like protein Idgf5 (440 aa).

Positions 1 to 27 (MRNKMIYFNFHLFVIIFANLQIFQVQA) are cleaved as a signal peptide. In terms of domain architecture, GH18 spans 28 to 439 (ANIFCYYDTQ…KSIHNAFKKF (412 aa)). Cysteine 32 and cysteine 56 are oxidised to a cystine. N-linked (GlcNAc...) asparagine glycans are attached at residues asparagine 126, asparagine 283, and asparagine 403. Residues cysteine 340 and cysteine 421 are joined by a disulfide bond.

Belongs to the glycosyl hydrolase 18 family. IDGF subfamily. Glycosylated.

The protein resides in the secreted. Cooperates with insulin-like peptides to stimulate the proliferation, polarization and motility of imaginal disk cells. May act by stabilizing the binding of insulin-like peptides to its receptor through a simultaneous interaction with both molecules to form a multiprotein signaling complex. This is Chitinase-like protein Idgf5 (Idgf5) from Glossina morsitans morsitans (Savannah tsetse fly).